Consider the following 189-residue polypeptide: Mitochondrial FAD-linked sulfhydryl oxidase ERV1 (189 aa).

In terms of domain architecture, ERV/ALR sulfhydryl oxidase spans 83-183 (DPPDVEQLGR…FDCNFWEKRW (101 aa)). FAD contacts are provided by residues 88-95 (EQLGRSSW), histidine 99, and tyrosine 128. 2 cysteine pairs are disulfide-bonded: cysteine 130–cysteine 133 and cysteine 159–cysteine 176. FAD-binding positions include 159 to 171 (CEAH…KLRK) and 182 to 183 (RW).

Homodimer. Interacts with MIA40, forming transient intermolecular disulfide bridges. Requires FAD as cofactor.

The protein resides in the mitochondrion intermembrane space. It carries out the reaction 2 R'C(R)SH + O2 = R'C(R)S-S(R)CR' + H2O2. Functionally, FAD-dependent sulfhydryl oxidase that catalyzes disulfide bond formation. Required for the import and folding of small cysteine-containing proteins in the mitochondrial intermembrane space (IMS). Forms a redox cycle with MIA40 that involves a disulfide relay system. Important for maintaining the cysteine residues in MIA40 in an oxidized state. Reduced ERV1 is reoxidized by cytochrome c. Required for the maturation of cytoplasmic, but not of mitochondrial Fe/S proteins. In Saccharomyces cerevisiae (strain ATCC 204508 / S288c) (Baker's yeast), this protein is Mitochondrial FAD-linked sulfhydryl oxidase ERV1 (ERV1).